The primary structure comprises 205 residues: Guanylate kinase (205 aa).

The region spanning 6-184 (GLLIVLSGPA…AVERIKAIVT (179 aa)) is the Guanylate kinase-like domain. 13–20 (GPAGVGKG) serves as a coordination point for ATP.

The protein belongs to the guanylate kinase family.

The protein localises to the cytoplasm. The enzyme catalyses GMP + ATP = GDP + ADP. Essential for recycling GMP and indirectly, cGMP. The chain is Guanylate kinase from Shouchella clausii (strain KSM-K16) (Alkalihalobacillus clausii).